The following is a 423-amino-acid chain: tRNA-dihydrouridine(16/17) synthase [NAD(P)(+)] (423 aa).

Position 2 is an N-acetylthreonine (Thr-2). Residues 35 to 37 (PMV) and Gln-92 each bind FMN. The active-site Proton donor is the Cys-121. FMN contacts are provided by residues Lys-160, His-188, 223 to 225 (NGN), and 247 to 248 (AE). The tract at residues 404 to 423 (KKRKADVPLESADKKKDVKA) is disordered. Residues 408–423 (ADVPLESADKKKDVKA) show a composition bias toward basic and acidic residues.

This sequence belongs to the Dus family. Dus1 subfamily. In terms of assembly, monomer. The cofactor is FMN.

The enzyme catalyses 5,6-dihydrouridine(16) in tRNA + NADP(+) = uridine(16) in tRNA + NADPH + H(+). It catalyses the reaction 5,6-dihydrouridine(16) in tRNA + NAD(+) = uridine(16) in tRNA + NADH + H(+). It carries out the reaction 5,6-dihydrouridine(17) in tRNA + NAD(+) = uridine(17) in tRNA + NADH + H(+). The catalysed reaction is 5,6-dihydrouridine(17) in tRNA + NADP(+) = uridine(17) in tRNA + NADPH + H(+). The enzyme catalyses a 5,6-dihydrouridine in mRNA + NAD(+) = a uridine in mRNA + NADH + H(+). It catalyses the reaction a 5,6-dihydrouridine in mRNA + NADP(+) = a uridine in mRNA + NADPH + H(+). In terms of biological role, catalyzes the synthesis of dihydrouridine, a modified base found in the D-loop of most tRNAs. Specifically modifies U16 and U17 in cytoplasmic tRNAs. Also able to mediate dihydrouridylation of some mRNAs, thereby affecting their translation. This chain is tRNA-dihydrouridine(16/17) synthase [NAD(P)(+)], found in Saccharomyces cerevisiae (strain ATCC 204508 / S288c) (Baker's yeast).